The primary structure comprises 213 residues: Nicolin-1 (213 aa).

In terms of assembly, part of the neuronal tubulin polyglutamylase complex which contains TPGS1, TPGS2, TTLL1, LRRC49 and NICN1.

The protein localises to the nucleus. This chain is Nicolin-1 (NICN1), found in Canis lupus familiaris (Dog).